The sequence spans 456 residues: MTOR-associated protein MEAK7 (456 aa).

Gly-2 is lipidated: N-myristoyl glycine. A TLDc domain is found at Ser-244–Gly-412.

In terms of assembly, interacts (via C-terminal domain) with MTOR and MLST8; the interaction with MTOR increases upon nutrient stimulation.

The protein resides in the membrane. It is found in the cytoplasm. The protein localises to the lysosome. Activates an alternative mTOR signaling through RPS6KB2 activation and EIF4EBP1 repression to regulate cell proliferation and migration. Recruits MTOR at the lysosome, essential for MTOR signaling at the lysosome. This chain is MTOR-associated protein MEAK7, found in Homo sapiens (Human).